We begin with the raw amino-acid sequence, 878 residues long: Calcium-transporting ATPase 1 (878 aa).

4 consecutive transmembrane segments (helical) span residues 50 to 72 (LFID…VQLF), 76 to 95 (FVES…VAVV), 243 to 263 (LGWV…LRLF), and 281 to 301 (FAVA…VTIV). Residues Val-287, Ala-288, Ile-290, and Glu-292 each contribute to the Ca(2+) site. Asp-334 acts as the 4-aspartylphosphate intermediate in catalysis. The next 6 helical transmembrane spans lie at 681-701 (LFSG…VGWV), 704-724 (FTAL…AIAL), 753-773 (VILI…YVGQ), 779-799 (MGVA…TFAA), 816-836 (YVLM…LPFL), and 845-865 (AFGW…VICM). Ca(2+) contacts are provided by Asn-713 and Asp-717.

Belongs to the cation transport ATPase (P-type) (TC 3.A.3) family. Type IIA subfamily.

Its subcellular location is the cell membrane. It catalyses the reaction Ca(2+)(in) + ATP + H2O = Ca(2+)(out) + ADP + phosphate + H(+). Inhibited by very high concentrations of cyclopiazonic acid (CPA). In terms of biological role, catalyzes the hydrolysis of ATP coupled with the transport of calcium. In Lactococcus lactis subsp. lactis (strain IL1403) (Streptococcus lactis), this protein is Calcium-transporting ATPase 1 (yoaB).